Reading from the N-terminus, the 115-residue chain is Large ribosomal subunit protein bL20 (115 aa).

The protein belongs to the bacterial ribosomal protein bL20 family.

Binds directly to 23S ribosomal RNA and is necessary for the in vitro assembly process of the 50S ribosomal subunit. It is not involved in the protein synthesizing functions of that subunit. This Borrelia garinii subsp. bavariensis (strain ATCC BAA-2496 / DSM 23469 / PBi) (Borreliella bavariensis) protein is Large ribosomal subunit protein bL20.